We begin with the raw amino-acid sequence, 405 residues long: Eukaryotic translation initiation factor 5 (405 aa).

Residue 27 to 34 participates in GTP binding; that stretch reads GRGNGIKT. Residues 143–202 are disordered; sequence NPPDSVSGSKKKKKAATASANVRGGGLSISDIAQGKSQNAPSDGTGSSTPQHHDEDEDEL. Residues serine 170 and serine 172 each carry the phosphoserine modification. A compositionally biased stretch (polar residues) spans 177–192; it reads GKSQNAPSDGTGSSTP. Threonine 191 is subject to Phosphothreonine. Serine 228 is modified (phosphoserine). Positions 241 to 402 constitute a W2 domain; sequence VNSELTQLDE…ETAESDDDEE (162 aa). Threonine 317 carries the post-translational modification Phosphothreonine. Residue serine 397 is modified to Phosphoserine.

This sequence belongs to the eIF-2-beta/eIF-5 family. As to quaternary structure, monomer. The factors eIF-1, eIF-2, eIF-3, TIF5/eIF-5 and methionyl-tRNAi form a multifactor complex (MFC) that may bind to the 40S ribosome. TIF32, NIP1 and TIF5/eIF-5 comprise a minimal 40S-ribosome-binding unit. Interacts with NIP1. Interacts with SUI3.

Functionally, catalyzes the hydrolysis of GTP bound to the 40S ribosomal initiation complex (40S.mRNA.Met-tRNA[F].eIF-2.GTP) with the subsequent joining of a 60S ribosomal subunit resulting in the release of eIF-2 and the guanine nucleotide. The subsequent joining of a 60S ribosomal subunit results in the formation of a functional 80S initiation complex (80S.mRNA.Met-tRNA[F]). eIF-5 is essential for cell viability. The polypeptide is Eukaryotic translation initiation factor 5 (TIF5) (Saccharomyces cerevisiae (strain ATCC 204508 / S288c) (Baker's yeast)).